Consider the following 629-residue polypeptide: MAPSKARSSPAVERRDRLTLAKLASYDDVATDALVDRAYFWTNTRKNRTKYIPVRGIMDDKVAEILLHHVIVAKDTVKAERELLAISGIKKYMAKLPSDREKEWFRRHLRKYIQMYLPDCPFEVTTTNRYTITEHEAAICARKFIKQGQEIKYLSGTLVPMTREEEQDLDLKRKDFSIVMSSRRKTPSFFLGPARFANHDCDANGRLVTRGSEGMQVVATRDIEIGEEITVSYGEDYFGIDNCECLCLTCERAVRNGWAPQVDSEASSTASTPALNDETKSAHGSTSPQKRKYAPDADSDASASPTPQKRRKFSRQYSKLRTEVSLSGDVTAIEPDPEQNTKIAVETTTDVPKDKPATNGVTENESNARVSENQRATSDREPSSPLGVDESQNSSASTAPTSLFDVGIKLEESTEAFTQETLTTTKAGSVADSHGDGDCRQLTAGIEQEALSELSESLELDDKSGTVVKRRKRRTRRQVVPSVEDESHRVRVPGDYTKTSKLLAQSYDRWVECRTCKTWFLQHNSYLTRRECPRCERHSMLYGFQWPKTDKDGPLDDEERVMDHRTVHRFLYPEEEARISRRDRGVSFGVTPTPELSEPRTETEDSEACDERRNTRASRRRTQSLRMTM.

In terms of domain architecture, SET spans 120 to 234; sequence CPFEVTTTNR…IGEEITVSYG (115 aa). 4 stretches are compositionally biased toward polar residues: residues 264–274, 338–350, 359–376, and 390–400; these read SEASSTASTPA, EQNT…TTTD, NGVT…NQRA, and ESQNSSASTAP. Disordered stretches follow at residues 264 to 400 and 586 to 629; these read SEAS…STAP and VSFG…RMTM. A compositionally biased stretch (basic and acidic residues) spans 597–614; the sequence is SEPRTETEDSEACDERRN.

The protein belongs to the class V-like SAM-binding methyltransferase superfamily. Histone-lysine methyltransferase family. Suvar4-20 subfamily.

The protein localises to the nucleus. It localises to the chromosome. It carries out the reaction L-lysyl(20)-[histone H4] + 3 S-adenosyl-L-methionine = N(6),N(6),N(6)-trimethyl-L-lysyl(20)-[histone H4] + 3 S-adenosyl-L-homocysteine + 3 H(+). Histone methyltransferase that trimethylates 'Lys-20' of histone H4 to form H4K20me3. This chain is Histone-lysine N-methyltransferase set9 (set9), found in Aspergillus terreus (strain NIH 2624 / FGSC A1156).